The following is a 110-amino-acid chain: Small ribosomal subunit protein bS16 (110 aa).

The disordered stretch occupies residues 84 to 110; that stretch reads KREARNNPEKAVPRKERKAAAEAAAKK.

Belongs to the bacterial ribosomal protein bS16 family.

The polypeptide is Small ribosomal subunit protein bS16 (Rhodopseudomonas palustris (strain BisB18)).